The primary structure comprises 763 residues: Phosphoglycerol transferase I (763 aa).

The next 4 membrane-spanning stretches (helical) occupy residues 1 to 21 (MSEL…AWKA), 26 to 46 (WWFA…ITLF), 77 to 97 (ILPG…LGWI), and 108 to 128 (FGYS…SPAF).

This sequence belongs to the OpgB family.

The protein resides in the cell inner membrane. It catalyses the reaction a phosphatidylglycerol + a membrane-derived-oligosaccharide D-glucose = a 1,2-diacyl-sn-glycerol + a membrane-derived-oligosaccharide 6-(glycerophospho)-D-glucose.. It functions in the pathway glycan metabolism; osmoregulated periplasmic glucan (OPG) biosynthesis. Its function is as follows. Transfers a phosphoglycerol residue from phosphatidylglycerol to the membrane-bound nascent glucan backbones. In Shigella boydii serotype 18 (strain CDC 3083-94 / BS512), this protein is Phosphoglycerol transferase I.